A 159-amino-acid chain; its full sequence is Small ribosomal subunit protein uS7 (159 aa).

This sequence belongs to the universal ribosomal protein uS7 family. As to quaternary structure, part of the 30S ribosomal subunit. Contacts proteins S9 and S11.

Functionally, one of the primary rRNA binding proteins, it binds directly to 16S rRNA where it nucleates assembly of the head domain of the 30S subunit. Is located at the subunit interface close to the decoding center, probably blocks exit of the E-site tRNA. This Elusimicrobium minutum (strain Pei191) protein is Small ribosomal subunit protein uS7.